A 339-amino-acid polypeptide reads, in one-letter code: Phosphate acyltransferase (339 aa).

The protein belongs to the PlsX family. As to quaternary structure, homodimer. Probably interacts with PlsY.

Its subcellular location is the cytoplasm. The enzyme catalyses a fatty acyl-[ACP] + phosphate = an acyl phosphate + holo-[ACP]. It functions in the pathway lipid metabolism; phospholipid metabolism. Functionally, catalyzes the reversible formation of acyl-phosphate (acyl-PO(4)) from acyl-[acyl-carrier-protein] (acyl-ACP). This enzyme utilizes acyl-ACP as fatty acyl donor, but not acyl-CoA. The protein is Phosphate acyltransferase of Ruthia magnifica subsp. Calyptogena magnifica.